A 294-amino-acid chain; its full sequence is Ribosomal protein L11 methyltransferase (294 aa).

Positions 146, 167, 189, and 231 each coordinate S-adenosyl-L-methionine.

The protein belongs to the methyltransferase superfamily. PrmA family.

It localises to the cytoplasm. The catalysed reaction is L-lysyl-[protein] + 3 S-adenosyl-L-methionine = N(6),N(6),N(6)-trimethyl-L-lysyl-[protein] + 3 S-adenosyl-L-homocysteine + 3 H(+). Methylates ribosomal protein L11. This chain is Ribosomal protein L11 methyltransferase, found in Aliivibrio fischeri (strain ATCC 700601 / ES114) (Vibrio fischeri).